A 297-amino-acid polypeptide reads, in one-letter code: Acetylglutamate kinase (297 aa).

Substrate-binding positions include 73–74 (GG), Arg95, and Asn188.

It belongs to the acetylglutamate kinase family. ArgB subfamily.

Its subcellular location is the cytoplasm. The enzyme catalyses N-acetyl-L-glutamate + ATP = N-acetyl-L-glutamyl 5-phosphate + ADP. It participates in amino-acid biosynthesis; L-arginine biosynthesis; N(2)-acetyl-L-ornithine from L-glutamate: step 2/4. Functionally, catalyzes the ATP-dependent phosphorylation of N-acetyl-L-glutamate. This Nostoc sp. (strain PCC 7120 / SAG 25.82 / UTEX 2576) protein is Acetylglutamate kinase.